The sequence spans 597 residues: MTLEKNRHANKGTSWTWMIYKFVVGVITVAILVLFITQKSVSQAQDKLRVEQQAIFSDQDTLQLKHIFHHGTGPKNYRLHRRLDITSEYLAKHQPYFTTLTQQLSEPVLEEHIASDNLDKIYQQSDWPEIHKGKNPFSIELPFKKADSEATRLKERNTLNFIESYLNYARDIKGDAQILNRINLDWIHDEIKVPNVTDRDTVVTLATISSNAYVRYPKDDDEKRKSDWIDLGDWDPNREDDDVNFGWDDIGLRGHVFVSKDNKTVVIGIKGTSGAGLPGGGSDETGGNDKTNDNLLFSCCCARISYMWTTVCDCYEKTYTCNQDCLEKELRKEDKYYQAVLELYRNVTDIYPPESTDIWVTGHSLGGALASLLGRTFGLPAVAFEAPGEMLATRRLHLPSPPGLPQHMENIWHFGNTADPIYMGVCNGASSTCNLAGYAMETTCHTGLQCVYDVVTDKGWSVNLLNHRIHTVIDDIILTYNETAPCAPSPPCRDCFNWRFVAHDDNEKDEPKLPNPLRSSSKSTLSTKTTSLKSSSTYSGSTSSSTVTKTTQTSPISSASPTDQDPPKKCLKRTWYGWCTKWGYDDDDDDEDTFERK.

Topologically, residues 1–15 (MTLEKNRHANKGTSW) are cytoplasmic. Residues 16-36 (TWMIYKFVVGVITVAILVLFI) form a helical; Signal-anchor for type II membrane protein membrane-spanning segment. The Lumenal segment spans residues 37 to 597 (TQKSVSQAQD…DDDEDTFERK (561 aa)). N-linked (GlcNAc...) asparagine glycosylation is found at N195, N262, and N346. S364 acts as the Charge relay system in catalysis. N481 is a glycosylation site (N-linked (GlcNAc...) asparagine). Residues 507-570 (EKDEPKLPNP…PTDQDPPKKC (64 aa)) are disordered. Low complexity predominate over residues 519–554 (SSSKSTLSTKTTSLKSSSTYSGSTSSSTVTKTTQTS).

The protein belongs to the AB hydrolase superfamily. Lipase family. Binds to both phosphatidylinositol (PI) and phosphatidylinositol 3,5-bisphosphate (PIP2).

Its subcellular location is the endosome. The protein resides in the multivesicular body membrane. The protein localises to the prevacuolar compartment membrane. It carries out the reaction a triacylglycerol + H2O = a diacylglycerol + a fatty acid + H(+). Its function is as follows. Lipase which is essential for lysis of subvacuolar cytoplasm to vacuole targeted bodies and intravacuolar autophagic bodies. Involved in the lysis of intravacuolar multivesicular body (MVB) vesicles. The intravacuolar membrane disintegration by ATG15 is critical to life span extension. This is Putative lipase ATG15 (ATG15) from Candida albicans (strain SC5314 / ATCC MYA-2876) (Yeast).